We begin with the raw amino-acid sequence, 813 residues long: Sorting nexin-29 (813 aa).

In terms of domain architecture, RUN spans Ser-36–Lys-180. Ser-268, Ser-291, Ser-292, Ser-330, and Ser-344 each carry phosphoserine. The segment at Phe-269–Ser-299 is disordered. Over residues Asp-346–Val-357 the composition is skewed to acidic residues. A disordered region spans residues Asp-346–Glu-378. Residues Ser-445 and Ser-450 each carry the phosphoserine modification. Residues Thr-466–Val-545 adopt a coiled-coil conformation. The residue at position 639 (Ser-639) is a Phosphoserine. Thr-641 carries the phosphothreonine modification. Phosphoserine is present on residues Ser-642 and Ser-646. The PX domain maps to Ala-656 to Gly-779. The tract at residues Pro-778–Leu-813 is disordered.

The protein belongs to the sorting nexin family.

The chain is Sorting nexin-29 (SNX29) from Homo sapiens (Human).